A 176-amino-acid polypeptide reads, in one-letter code: ATP-dependent protease subunit HslV (176 aa).

Residue Thr-2 is part of the active site. Na(+) is bound by residues Gly-157, Cys-160, and Thr-163.

Belongs to the peptidase T1B family. HslV subfamily. A double ring-shaped homohexamer of HslV is capped on each side by a ring-shaped HslU homohexamer. The assembly of the HslU/HslV complex is dependent on binding of ATP.

It localises to the cytoplasm. The catalysed reaction is ATP-dependent cleavage of peptide bonds with broad specificity.. With respect to regulation, allosterically activated by HslU binding. Protease subunit of a proteasome-like degradation complex believed to be a general protein degrading machinery. The sequence is that of ATP-dependent protease subunit HslV from Escherichia coli O45:K1 (strain S88 / ExPEC).